A 487-amino-acid polypeptide reads, in one-letter code: MTFQSLILGPALPEILLAVLGLVLLMVGVFRKTDSTGLVGLLAVYGLLMALAVVGLGAAPETPQLAFGGLFIDDGFARYAKALTLLGAVLTLLLSMVWLKRENEGRFEFPILVLFATIGMMMMISANDLIALYMGLELQSLALYVIAAYQRDNLKSTEAGLKYFVLGALASGLLLYGMSLVYGFAGTTRFDGLAQVAAAEGGISTGLLIGIVFIIAGLAFKVSAVPFHMWAPDVYEGAPTPVTAFFAVAPKIAALTLFARVMMGPFAAYADQWQQVIILISILSMLLGGFAAIVQTNIKRLMAYSSIGHVGYALIGIAAGTTEGVRGVLVYLAIYLFMNVGTFTVILAMRQKGRAVEGINDLAGLSKQHPMMAAAMAVFMFSMAGVPPLAGFFGKFYVFMAAVNSGLFALAVIGVLSSVVAAFYYLRIIKLMYFDEATEPLDALSGTTMKVILIGTAAVVALFFLAPSVVVDGAQAAAEALTFASAR.

13 consecutive transmembrane segments (helical) span residues 7-27, 38-58, 79-99, 111-131, 164-184, 207-227, 238-258, 276-296, 301-321, 328-348, 373-393, 406-426, and 451-471; these read ILGP…LLMV, LVGL…GLGA, YAKA…MVWL, ILVL…DLIA, FVLG…VYGF, LLIG…AVPF, APTP…LTLF, VIIL…IVQT, LMAY…AAGT, VLVY…VILA, AAAM…AGFF, GLFA…FYYL, and VILI…SVVV.

The protein belongs to the complex I subunit 2 family. As to quaternary structure, NDH-1 is composed of 14 different subunits. Subunits NuoA, H, J, K, L, M, N constitute the membrane sector of the complex.

It is found in the cell inner membrane. It catalyses the reaction a quinone + NADH + 5 H(+)(in) = a quinol + NAD(+) + 4 H(+)(out). Its function is as follows. NDH-1 shuttles electrons from NADH, via FMN and iron-sulfur (Fe-S) centers, to quinones in the respiratory chain. The immediate electron acceptor for the enzyme in this species is believed to be ubiquinone. Couples the redox reaction to proton translocation (for every two electrons transferred, four hydrogen ions are translocated across the cytoplasmic membrane), and thus conserves the redox energy in a proton gradient. This Rhodospirillum rubrum (strain ATCC 11170 / ATH 1.1.1 / DSM 467 / LMG 4362 / NCIMB 8255 / S1) protein is NADH-quinone oxidoreductase subunit N.